A 134-amino-acid chain; its full sequence is UPF0412 protein YaaI (134 aa).

The signal sequence occupies residues 1–23 (MKSVITISASLAISLMLCCTAQA).

Belongs to the UPF0412 family.

The sequence is that of UPF0412 protein YaaI from Escherichia coli (strain UTI89 / UPEC).